Consider the following 1107-residue polypeptide: Dynein axonemal assembly factor 1 homolog (1107 aa).

LRR repeat units follow at residues 34-56 (HLND…EEYV), 57-78 (GLKC…EYQT), 79-100 (ELKC…DSCK), 101-122 (QLDT…GHDI), 125-146 (VLNT…DHLR), and 150-171 (FVSV…KILG). The LRRCT domain maps to 184–223 (NPVVNEIPSYRKTLILECKNLTYLDTRPVFDRDRACAEAW). Disordered stretches follow at residues 258-281 (HRGD…KASK), 428-487 (NESP…TLNV), 500-608 (ESKD…LEKE), 780-810 (KEEP…EHEQ), 834-855 (SSED…AEED), and 1070-1107 (AAHA…DNCD). A compositionally biased stretch (polar residues) spans 428–437 (NESPLTSPSF). The segment covering 446–459 (EEIEPTDVEEEQQI) has biased composition (acidic residues). Residues 500 to 512 (ESKDGELISKVES) are compositionally biased toward basic and acidic residues. Over residues 531–544 (DNSESEPTDITNED) the composition is skewed to acidic residues. The span at 549-560 (SSSVSVTSSTDS) shows a compositional bias: low complexity. Polar residues predominate over residues 581–597 (NYRQDSTTSTDSENEVS). Residues 801–810 (LEVHSSEHEQ) are compositionally biased toward basic and acidic residues. The span at 844–855 (DSSESSDSAEED) shows a compositional bias: acidic residues. Residues 1083 to 1097 (VESKPVEIDGTKEET) are compositionally biased toward basic and acidic residues. Residues 1098–1107 (VDSELADNCD) are compositionally biased toward acidic residues.

It belongs to the DNAAF1 family.

The protein localises to the cell projection. Its subcellular location is the cilium. Its function is as follows. Cilium-specific protein required for cilia structures. The sequence is that of Dynein axonemal assembly factor 1 homolog from Aedes aegypti (Yellowfever mosquito).